A 406-amino-acid polypeptide reads, in one-letter code: Cysteine desulfurase (406 aa).

The residue at position 226 (lysine 226) is an N6-(pyridoxal phosphate)lysine. Residue cysteine 364 is the Cysteine persulfide intermediate of the active site.

It belongs to the class-V pyridoxal-phosphate-dependent aminotransferase family. Csd subfamily. In terms of assembly, homodimer. Interacts with SufE and the SufBCD complex composed of SufB, SufC and SufD. The interaction with SufE is required to mediate the direct transfer of the sulfur atom from the S-sulfanylcysteine. Requires pyridoxal 5'-phosphate as cofactor.

Its subcellular location is the cytoplasm. The enzyme catalyses (sulfur carrier)-H + L-cysteine = (sulfur carrier)-SH + L-alanine. The catalysed reaction is L-selenocysteine + AH2 = hydrogenselenide + L-alanine + A + H(+). It functions in the pathway cofactor biosynthesis; iron-sulfur cluster biosynthesis. Cysteine desulfurases mobilize the sulfur from L-cysteine to yield L-alanine, an essential step in sulfur metabolism for biosynthesis of a variety of sulfur-containing biomolecules. Component of the suf operon, which is activated and required under specific conditions such as oxidative stress and iron limitation. Acts as a potent selenocysteine lyase in vitro, that mobilizes selenium from L-selenocysteine. Selenocysteine lyase activity is however unsure in vivo. In Salmonella heidelberg (strain SL476), this protein is Cysteine desulfurase.